The chain runs to 478 residues: 5-hydroxytryptamine receptor 3A (478 aa).

The signal sequence occupies residues 1–23 (MLLWVQQALLALLLPTLLAQGEA). Over 24–241 (RRSRNTTRPA…MKFYVVIRRR (218 aa)) the chain is Extracellular. Residues Asn28, Asn104, Asn170, and Asn186 are each glycosylated (N-linked (GlcNAc...) asparagine). Cys157 and Cys171 are disulfide-bonded. A helical transmembrane segment spans residues 242–268 (PLFYVVSLLLPSIFLMVMDIVGFYLPP). Residues 269–273 (NSGER) are Cytoplasmic-facing. Residues 274–292 (VSFKITLLLGYSVFLIIVS) form a helical membrane-spanning segment. Residues 293-302 (DTLPATAIGT) lie on the Extracellular side of the membrane. A helical transmembrane segment spans residues 303-321 (PLIGVYFVVCMALLVISLA). At 322–455 (ETIFIVRLVH…GSVLDKLLFH (134 aa)) the chain is on the cytoplasmic side. The disordered stretch occupies residues 389–408 (GGPQDFEKSPRDRCSPPPPP). A compositionally biased stretch (basic and acidic residues) spans 393–402 (DFEKSPRDRC). The HA-stretch; determines single-channel conductance in 5-HT3 receptors stretch occupies residues 414 to 450 (AVCGLLQELSSIRQFLEKRDEIREVARDWLRVGSVLD). Residues 456-475 (IYLLAVLAYSITLVMLWSIW) form a helical membrane-spanning segment. Topologically, residues 476 to 478 (QYA) are extracellular.

This sequence belongs to the ligand-gated ion channel (TC 1.A.9) family. 5-hydroxytryptamine receptor (TC 1.A.9.2) subfamily. HTR3A sub-subfamily. Forms homopentameric as well as heteropentameric serotonin-activated cation-selective channel complexes with HTR3B or HTR3C or HTR3D or HTR3E. The homomeric complex is functional but exhibits low conductance with modified voltage dependence, and decreased agonist and antagonist affinity. Heteropentameric complexes display properties which resemble that of neuronal serotonin-activated channels in vivo. Interacts with RIC3. Expressed in cerebral cortex, amygdala, hippocampus, and testis. Detected in monocytes of the spleen and tonsil, in small and large intestine, uterus, prostate, ovary and placenta.

The protein localises to the postsynaptic cell membrane. It is found in the cell membrane. The enzyme catalyses Na(+)(in) = Na(+)(out). The catalysed reaction is K(+)(in) = K(+)(out). It carries out the reaction Ca(2+)(in) = Ca(2+)(out). It catalyses the reaction Mg(2+)(in) = Mg(2+)(out). In terms of biological role, forms serotonin (5-hydroxytryptamine/5-HT3)-activated cation-selective channel complexes, which when activated cause fast, depolarizing responses in neurons. The polypeptide is 5-hydroxytryptamine receptor 3A (Homo sapiens (Human)).